We begin with the raw amino-acid sequence, 261 residues long: Hemin import ATP-binding protein HmuV (261 aa).

The region spanning 8–243 is the ABC transporter domain; sequence IRVTDLSYSV…ESIRTAYGHE (236 aa). Residue 40 to 47 coordinates ATP; that stretch reads GRNGAGKS.

The protein belongs to the ABC transporter superfamily. Heme (hemin) importer (TC 3.A.1.14.5) family. In terms of assembly, the complex is composed of two ATP-binding proteins (HmuV), two transmembrane proteins (HmuU) and a solute-binding protein (HmuT).

The protein localises to the cell membrane. In terms of biological role, part of the ABC transporter complex HmuTUV involved in hemin import. Responsible for energy coupling to the transport system. The polypeptide is Hemin import ATP-binding protein HmuV (Deinococcus radiodurans (strain ATCC 13939 / DSM 20539 / JCM 16871 / CCUG 27074 / LMG 4051 / NBRC 15346 / NCIMB 9279 / VKM B-1422 / R1)).